The sequence spans 371 residues: Phospholipid-transporting ATPase accessory subunit ivn1 (371 aa).

Residues 1 to 39 (MSQTEIVKKPKHKRFKRPDKSRFVQQTLPAWQFIFTPWT) lie on the Cytoplasmic side of the membrane. Residues 40–60 (VLPLLFLLGIVFAPLGAGMFV) form a helical membrane-spanning segment. The Extracellular portion of the chain corresponds to 61–325 (ASRRVKELRI…STTSVIGGKN (265 aa)). Cystine bridges form between cysteine 75–cysteine 111 and cysteine 166–cysteine 181. The N-linked (GlcNAc...) asparagine glycan is linked to asparagine 99. Residues asparagine 190, asparagine 212, asparagine 216, asparagine 233, asparagine 284, and asparagine 297 are each glycosylated (N-linked (GlcNAc...) asparagine). A helical transmembrane segment spans residues 326 to 346 (YFLGILYFVIGGLCAASGVIL). The Cytoplasmic portion of the chain corresponds to 347 to 371 (SIACLIKPRRVGDPRYLSWNRGKSS).

Belongs to the CDC50/LEM3 family.

The protein resides in the endoplasmic reticulum membrane. In terms of biological role, accessory component of a P4-ATPase flippase complex which catalyzes the hydrolysis of ATP coupled to the transport of aminophospholipids from the lumenal to the cytosolic leaflet of membranes and ensures the maintenance of asymmetric distribution of phospholipids. The sequence is that of Phospholipid-transporting ATPase accessory subunit ivn1 (ivn1) from Schizosaccharomyces pombe (strain 972 / ATCC 24843) (Fission yeast).